Reading from the N-terminus, the 275-residue chain is 2,3,4,5-tetrahydropyridine-2,6-dicarboxylate N-succinyltransferase (275 aa).

Residues Arg106 and Asp143 each coordinate substrate.

This sequence belongs to the transferase hexapeptide repeat family. Homotrimer.

Its subcellular location is the cytoplasm. It carries out the reaction (S)-2,3,4,5-tetrahydrodipicolinate + succinyl-CoA + H2O = (S)-2-succinylamino-6-oxoheptanedioate + CoA. It functions in the pathway amino-acid biosynthesis; L-lysine biosynthesis via DAP pathway; LL-2,6-diaminopimelate from (S)-tetrahydrodipicolinate (succinylase route): step 1/3. The protein is 2,3,4,5-tetrahydropyridine-2,6-dicarboxylate N-succinyltransferase of Ralstonia nicotianae (strain ATCC BAA-1114 / GMI1000) (Ralstonia solanacearum).